Here is a 345-residue protein sequence, read N- to C-terminus: Phosphoribosylformylglycinamidine cyclo-ligase (345 aa).

Belongs to the AIR synthase family.

It localises to the cytoplasm. The catalysed reaction is 2-formamido-N(1)-(5-O-phospho-beta-D-ribosyl)acetamidine + ATP = 5-amino-1-(5-phospho-beta-D-ribosyl)imidazole + ADP + phosphate + H(+). It participates in purine metabolism; IMP biosynthesis via de novo pathway; 5-amino-1-(5-phospho-D-ribosyl)imidazole from N(2)-formyl-N(1)-(5-phospho-D-ribosyl)glycinamide: step 2/2. The sequence is that of Phosphoribosylformylglycinamidine cyclo-ligase from Shewanella baltica (strain OS185).